Here is a 636-residue protein sequence, read N- to C-terminus: Protein SOSEKI 2 (636 aa).

The tract at residues 9-103 is DIX-like oligomerization domain; sequence HKIEVIYLLS…YVLKALEVMD (95 aa). Disordered stretches follow at residues 164–188, 281–304, 340–393, and 499–524; these read VHNNMTGKANRNEQGDAYGTTSRVP, HGRLSRRSSDTLRDSNSVGNTVDI, VEGS…TSAK, and LGSGQASESFSPASPHAPQRPIVSRP. 2 stretches are compositionally biased toward polar residues: residues 375–390 and 499–510; these read SSKSATQNSRPVTYET and LGSGQASESFSP.

This sequence belongs to the SOSEKI family. Homodimer. Forms long polymer filaments with other SOKs proteins polymers crucial for polar localization and biological activity.

The protein localises to the cell membrane. SOSEKI proteins locally interpret global polarity cues and can influence cell division orientation to coordinate cell polarization relative to body axes. In Physcomitrium patens (Spreading-leaved earth moss), this protein is Protein SOSEKI 2.